The sequence spans 445 residues: UDP-N-acetylmuramate--L-alanine ligase (445 aa).

Residue 108–114 participates in ATP binding; sequence GSDGKTT.

The protein belongs to the MurCDEF family.

Its subcellular location is the cytoplasm. The catalysed reaction is UDP-N-acetyl-alpha-D-muramate + L-alanine + ATP = UDP-N-acetyl-alpha-D-muramoyl-L-alanine + ADP + phosphate + H(+). It functions in the pathway cell wall biogenesis; peptidoglycan biosynthesis. Cell wall formation. The sequence is that of UDP-N-acetylmuramate--L-alanine ligase from Pseudothermotoga lettingae (strain ATCC BAA-301 / DSM 14385 / NBRC 107922 / TMO) (Thermotoga lettingae).